Reading from the N-terminus, the 391-residue chain is Oxytocin receptor (391 aa).

Residues 1–38 (MEGAFAANWSAEAVNGSAAPPGTEGNRTAGPPQRNEAL) lie on the Extracellular side of the membrane. 3 N-linked (GlcNAc...) asparagine glycosylation sites follow: Asn8, Asn15, and Asn26. The chain crosses the membrane as a helical span at residues 39–63 (ARVEVAVLSLILFLALSGNACVLLA). Residues 64 to 74 (LRTTRHKHSRL) lie on the Cytoplasmic side of the membrane. Residues 75-97 (FFFMKHLSIADLAVAVFQVLPQL) traverse the membrane as a helical segment. The Extracellular segment spans residues 98–113 (LWDITFRFYGPDLLCR). Cys112 and Cys187 are disulfide-bonded. Residues 114–135 (LVKYLQVVGMFASTYLLLLMSL) form a helical membrane-spanning segment. The Cytoplasmic segment spans residues 136–154 (DRCLAICQPLRSLRRRTDR). The chain crosses the membrane as a helical span at residues 155-175 (LAVLATWLGCLVASAPQVHIF). Over 176–202 (SLREVADGVFDCWAVFIQPWGPKAYIT) the chain is Extracellular. Residues 203-225 (WITLAVYIVPVIVLAACYGLISF) traverse the membrane as a helical segment. The Cytoplasmic portion of the chain corresponds to 226 to 277 (KIWQNLRLKTEAAAAEASAGAEGAAADCAGRAALARVSNVKLISKAKIRTVK). The chain crosses the membrane as a helical span at residues 278 to 296 (MTFIVVLAFIVCWTPFFFK). At 297–311 (QMWSVWDADAPKEAS) the chain is on the extracellular side. Residues 312–334 (AFIIAMLLASLNSCCNPWIYMLF) form a helical membrane-spanning segment. Residues 335-391 (TGHLFQDLVQRFLCCSFRRLKGSQLGETSVTKKIHSYTFVLSRHSSSQRSCSQPSTV) are Cytoplasmic-facing. Ser370 carries the post-translational modification Phosphoserine.

Belongs to the G-protein coupled receptor 1 family. Vasopressin/oxytocin receptor subfamily.

The protein localises to the cell membrane. Functionally, receptor for oxytocin. The activity of this receptor is mediated by G proteins which activate a phosphatidylinositol-calcium second messenger system. This Ovis aries (Sheep) protein is Oxytocin receptor (OXTR).